Consider the following 324-residue polypeptide: Annexin A10 (324 aa).

Annexin repeat units follow at residues F17–Y88, P89–Q160, A171–L243, and D247–A318.

It belongs to the annexin family.

In Homo sapiens (Human), this protein is Annexin A10 (ANXA10).